Here is a 151-residue protein sequence, read N- to C-terminus: MKQIDLKILDGRIGNEFPLPAYATEGSAGLDLRALTESALTVAPGQTVLIPTGISIYIADPNLAAVILPRSGLGHKNGIVLGNLVGLIDSDYQGPLMVSLWNRSDKPFTVEVGDRIAQLVFVPVVQASFNIVNDFAQTERGEGGFGHSGKQ.

Residues 70 to 72 (RSG), Asn83, 87 to 89 (LID), and Met97 each bind substrate.

This sequence belongs to the dUTPase family. The cofactor is Mg(2+).

It carries out the reaction dUTP + H2O = dUMP + diphosphate + H(+). The protein operates within pyrimidine metabolism; dUMP biosynthesis; dUMP from dCTP (dUTP route): step 2/2. Its function is as follows. This enzyme is involved in nucleotide metabolism: it produces dUMP, the immediate precursor of thymidine nucleotides and it decreases the intracellular concentration of dUTP so that uracil cannot be incorporated into DNA. The chain is Deoxyuridine 5'-triphosphate nucleotidohydrolase from Actinobacillus pleuropneumoniae serotype 7 (strain AP76).